The following is a 437-amino-acid chain: Probable receptor-like serine/threonine-protein kinase At4g34500 (437 aa).

Residues leucine 25–valine 45 traverse the membrane as a helical segment. Residues phenylalanine 145 to arginine 426 form the Protein kinase domain. ATP is bound by residues isoleucine 151–valine 159 and lysine 173. Tyrosine 220 is modified (phosphotyrosine). The Proton acceptor role is filled by aspartate 273. Residue serine 277 is modified to Phosphoserine. Phosphothreonine occurs at positions 307 and 312. A Phosphotyrosine modification is found at tyrosine 320.

Belongs to the protein kinase superfamily. Ser/Thr protein kinase family.

It localises to the cell membrane. It carries out the reaction L-seryl-[protein] + ATP = O-phospho-L-seryl-[protein] + ADP + H(+). The enzyme catalyses L-threonyl-[protein] + ATP = O-phospho-L-threonyl-[protein] + ADP + H(+). This Arabidopsis thaliana (Mouse-ear cress) protein is Probable receptor-like serine/threonine-protein kinase At4g34500.